A 493-amino-acid polypeptide reads, in one-letter code: Mitochondrial distribution and morphology protein 10 (493 aa).

It belongs to the MDM10 family. Component of the ER-mitochondria encounter structure (ERMES) or MDM complex, composed of MMM1, MDM10, MDM12 and MDM34. Associates with the mitochondrial outer membrane sorting assembly machinery SAM(core) complex, which consists of SAM35, SAM37 and SAM50, to form a SAM(holo) complex.

It is found in the mitochondrion outer membrane. In terms of biological role, component of the ERMES/MDM complex, which serves as a molecular tether to connect the endoplasmic reticulum and mitochondria. Components of this complex are involved in the control of mitochondrial shape and protein biogenesis and may function in phospholipid exchange. MDM10 is involved in the late assembly steps of the general translocase of the mitochondrial outer membrane (TOM complex). Functions in the TOM40-specific route of the assembly of outer membrane beta-barrel proteins, including the association of TOM40 with the receptor TOM22 and small TOM proteins. Can associate with the SAM(core) complex as well as the MDM12-MMM1 complex, both involved in late steps of the major beta-barrel assembly pathway, that is responsible for biogenesis of all outer membrane beta-barrel proteins. May act as a switch that shuttles between both complexes and channels precursor proteins into the TOM40-specific pathway. Plays a role in mitochondrial morphology and in the inheritance of mitochondria. In Saccharomyces cerevisiae (strain RM11-1a) (Baker's yeast), this protein is Mitochondrial distribution and morphology protein 10.